The sequence spans 415 residues: Tyrosine--tRNA ligase (415 aa).

The short motif at 54 to 63 (PTGTDIHIGH) is the 'HIGH' region element. The 'KMSKS' region signature appears at 248–252 (KMSKS). Position 251 (lysine 251) interacts with ATP. Positions 351-415 (AKAFYLFSKM…GKKKFLRVST (65 aa)) constitute an S4 RNA-binding domain.

The protein belongs to the class-I aminoacyl-tRNA synthetase family. TyrS type 2 subfamily. In terms of assembly, homodimer.

It is found in the cytoplasm. The enzyme catalyses tRNA(Tyr) + L-tyrosine + ATP = L-tyrosyl-tRNA(Tyr) + AMP + diphosphate + H(+). Its function is as follows. Catalyzes the attachment of tyrosine to tRNA(Tyr) in a two-step reaction: tyrosine is first activated by ATP to form Tyr-AMP and then transferred to the acceptor end of tRNA(Tyr). The protein is Tyrosine--tRNA ligase of Prochlorococcus marinus (strain NATL2A).